The sequence spans 107 residues: Ferredoxin (107 aa).

2 consecutive 4Fe-4S ferredoxin-type domains span residues 8 to 37 (ERVV…LDEN) and 38 to 67 (GKSR…KASE). [4Fe-4S] cluster contacts are provided by C17, C20, and C23. Residues C27, C47, and C53 each coordinate [3Fe-4S] cluster. C57 is a [4Fe-4S] cluster binding site.

As to quaternary structure, monomer. It depends on [4Fe-4S] cluster as a cofactor. [3Fe-4S] cluster is required as a cofactor. In terms of processing, the N-terminus is blocked.

Functionally, ferredoxins are iron-sulfur proteins that transfer electrons in a wide variety of metabolic reactions. The chain is Ferredoxin from Pyrobaculum islandicum (strain DSM 4184 / JCM 9189 / GEO3).